The sequence spans 230 residues: Phosphatidylserine decarboxylase proenzyme (230 aa).

Ser186 acts as the Schiff-base intermediate with substrate; via pyruvic acid in catalysis. Ser186 bears the Pyruvic acid (Ser); by autocatalysis mark.

This sequence belongs to the phosphatidylserine decarboxylase family. PSD-A subfamily. In terms of assembly, heterodimer of a large membrane-associated beta subunit and a small pyruvoyl-containing alpha subunit. Requires pyruvate as cofactor. Post-translationally, is synthesized initially as an inactive proenzyme. Formation of the active enzyme involves a self-maturation process in which the active site pyruvoyl group is generated from an internal serine residue via an autocatalytic post-translational modification. Two non-identical subunits are generated from the proenzyme in this reaction, and the pyruvate is formed at the N-terminus of the alpha chain, which is derived from the carboxyl end of the proenzyme. The post-translation cleavage follows an unusual pathway, termed non-hydrolytic serinolysis, in which the side chain hydroxyl group of the serine supplies its oxygen atom to form the C-terminus of the beta chain, while the remainder of the serine residue undergoes an oxidative deamination to produce ammonia and the pyruvoyl prosthetic group on the alpha chain.

The protein localises to the cell membrane. The enzyme catalyses a 1,2-diacyl-sn-glycero-3-phospho-L-serine + H(+) = a 1,2-diacyl-sn-glycero-3-phosphoethanolamine + CO2. It participates in phospholipid metabolism; phosphatidylethanolamine biosynthesis; phosphatidylethanolamine from CDP-diacylglycerol: step 2/2. Catalyzes the formation of phosphatidylethanolamine (PtdEtn) from phosphatidylserine (PtdSer). In Wolbachia sp. subsp. Brugia malayi (strain TRS), this protein is Phosphatidylserine decarboxylase proenzyme.